The sequence spans 188 residues: Methylamine dehydrogenase light chain (188 aa).

Residues 1–57 (MLGNFRFDDMVEKLSRRVAGRTSRRGAIGRLGTVLAGAALVPLLPVDRRGRVSRANA) constitute a signal peptide (tat-type signal). Intrachain disulfides connect cysteine 80/cysteine 145, cysteine 86/cysteine 118, cysteine 93/cysteine 178, cysteine 95/cysteine 143, cysteine 103/cysteine 134, and cysteine 135/cysteine 166. Tryptophan 114 bears the Tryptophylquinone mark. Residues 114 to 165 (WVASCYNPTDGQSYLIAYRDCCGYNVSGRCPCLNTEGELPVYRPEFANDIIW) constitute a cross-link (tryptophan tryptophylquinone (Trp-Trp)).

Belongs to the aromatic amine dehydrogenase light chain family. Heterotetramer of two light and two heavy chains. The cofactor is tryptophan tryptophylquinone residue. In terms of processing, predicted to be exported by the Tat system. The position of the signal peptide cleavage has been experimentally proven. Post-translationally, tryptophan tryptophylquinone (TTQ) is formed by oxidation of the indole ring of a tryptophan to form tryptophylquinone followed by covalent cross-linking with another tryptophan residue.

It is found in the periplasm. It catalyses the reaction 2 oxidized [amicyanin] + methylamine + H2O = 2 reduced [amicyanin] + formaldehyde + NH4(+) + 2 H(+). It functions in the pathway one-carbon metabolism; methylamine degradation; formaldehyde from methylamine: step 1/1. Functionally, methylamine dehydrogenase carries out the oxidation of methylamine. Electrons are passed from methylamine dehydrogenase to amicyanin. The polypeptide is Methylamine dehydrogenase light chain (mauA) (Paracoccus versutus (Thiobacillus versutus)).